Consider the following 122-residue polypeptide: Large ribosomal subunit protein uL14 (122 aa).

Belongs to the universal ribosomal protein uL14 family. Part of the 50S ribosomal subunit. Forms a cluster with proteins L3 and L19. In the 70S ribosome, L14 and L19 interact and together make contacts with the 16S rRNA in bridges B5 and B8.

Functionally, binds to 23S rRNA. Forms part of two intersubunit bridges in the 70S ribosome. This is Large ribosomal subunit protein uL14 from Streptomyces coelicolor (strain ATCC BAA-471 / A3(2) / M145).